A 509-amino-acid polypeptide reads, in one-letter code: ATP synthase subunit alpha, mitochondrial (509 aa).

171-178 serves as a coordination point for ATP; it reads GDRQTGKT.

Belongs to the ATPase alpha/beta chains family. F-type ATPases have 2 components, CF(1) - the catalytic core - and CF(0) - the membrane proton channel. CF(1) has five subunits: alpha(3), beta(3), gamma(1), delta(1), epsilon(1). CF(0) has three main subunits: a, b and c.

The protein resides in the mitochondrion. It is found in the mitochondrion inner membrane. Mitochondrial membrane ATP synthase (F(1)F(0) ATP synthase or Complex V) produces ATP from ADP in the presence of a proton gradient across the membrane which is generated by electron transport complexes of the respiratory chain. F-type ATPases consist of two structural domains, F(1) - containing the extramembraneous catalytic core, and F(0) - containing the membrane proton channel, linked together by a central stalk and a peripheral stalk. During catalysis, ATP synthesis in the catalytic domain of F(1) is coupled via a rotary mechanism of the central stalk subunits to proton translocation. Subunits alpha and beta form the catalytic core in F(1). Rotation of the central stalk against the surrounding alpha(3)beta(3) subunits leads to hydrolysis of ATP in three separate catalytic sites on the beta subunits. Subunit alpha does not bear the catalytic high-affinity ATP-binding sites. In Nicotiana plumbaginifolia (Leadwort-leaved tobacco), this protein is ATP synthase subunit alpha, mitochondrial (ATPA).